The following is a 736-amino-acid chain: Nucleoporin nup60 (736 aa).

The disordered stretch occupies residues 1-46 (MSSGPIRTLHKGKAARNRTPYDRIAASKDGNHSNGPQTPSKSIFQR). A compositionally biased stretch (basic and acidic residues) spans 19–31 (TPYDRIAASKDGN). A compositionally biased stretch (polar residues) spans 32-43 (HSNGPQTPSKSI). 4 positions are modified to phosphoserine: S157, S159, S161, and S162. Disordered stretches follow at residues 178-210 (RAAA…NSAK), 295-321 (DTSF…KTPS), 338-519 (TPSI…PNET), 565-614 (AVTD…RSLF), and 647-701 (EQAE…FPKF). Polar residues-rich tracts occupy residues 196–210 (RTSS…NSAK) and 295–314 (DTSF…TTAN). The segment covering 375–397 (QIRPSSEKSEPEKKEPSAFETLE) has biased composition (basic and acidic residues). Polar residues predominate over residues 456 to 473 (SATTDKPSPPVSSIFSFN). 2 stretches are compositionally biased toward low complexity: residues 474-505 (APSA…TSFS) and 573-587 (EVSS…TMIS). Polar residues predominate over residues 588 to 597 (QPNTGFSFGS). Residues 664–692 (EVEKPSAEGTNEHKQDATMTLEKTDKQGS) show a composition bias toward basic and acidic residues.

Component of the nuclear pore complex (NPC). NPC constitutes the exclusive means of nucleocytoplasmic transport. NPCs allow the passive diffusion of ions and small molecules and the active, nuclear transport receptor-mediated bidirectional transport of macromolecules such as proteins, RNAs, ribonucleoparticles (RNPs), and ribosomal subunits across the nuclear envelope.

Its subcellular location is the nucleus. The protein resides in the nuclear pore complex. The protein localises to the nucleus membrane. Functionally, functions as a component of the nuclear pore complex (NPC). NPC components, collectively referred to as nucleoporins (NUPs), can play the role of both NPC structural components and of docking or interaction partners for transiently associated nuclear transport factors. Active directional transport is assured by both, a Phe-Gly (FG) repeat affinity gradient for these transport factors across the NPC and a transport cofactor concentration gradient across the nuclear envelope. The protein is Nucleoporin nup60 (nup60) of Schizosaccharomyces pombe (strain 972 / ATCC 24843) (Fission yeast).